Consider the following 381-residue polypeptide: Heterogeneous nuclear rnp K-like protein 2 (381 aa).

The segment at M1–P34 is disordered. The span at T15–A33 shows a compositional bias: low complexity. KH domains lie at T43–I107, I156–I221, and N258–L326. Residues R357–S381 are disordered. Phosphoserine is present on residues S358, S360, and S362. Residues E369–S381 are compositionally biased toward basic and acidic residues.

The protein belongs to the HEK2 family. In terms of assembly, binds RNA. Post-translationally, phosphorylated by the plasma membrane-Anchored casein kinase YCK1. Phosphorylation at its C-terminus reduces its RNA-binding capacity.

It is found in the cytoplasm. It localises to the P-body. Its subcellular location is the nucleus. The protein localises to the chromosome. The protein resides in the telomere. Functionally, RNA-binding protein involved in the correct localization of transcripts in the cell. RNA localization is a widespread mechanism for achieving localized protein synthesis. Required for the asymmetric localization to the daughter cell nucleus of the ASH1 transcript, coding for a specific repressor of transcription. Overexpression inhibits translation of the ASH1 transcript. Involved in the stability of transcripts, like the MTL1 mRNA. Involved in structural and functional organization of telomeric chromatin and regulates silencing at the HMR locus. In Saccharomyces cerevisiae (strain RM11-1a) (Baker's yeast), this protein is Heterogeneous nuclear rnp K-like protein 2 (HEK2).